Consider the following 932-residue polypeptide: LPS-assembly protein LptD (932 aa).

Residues 1 to 33 form the signal peptide; sequence MALKSPAFRRKFPLLVTGGLLALQPLATSYAVA. The segment at 54–87 is disordered; it reads PVNNLPPRPVHEGAAVSSGTEAASEGETADRPML.

This sequence belongs to the LptD family. As to quaternary structure, component of the lipopolysaccharide transport and assembly complex. Interacts with LptE and LptA.

The protein resides in the cell outer membrane. In terms of biological role, together with LptE, is involved in the assembly of lipopolysaccharide (LPS) at the surface of the outer membrane. The protein is LPS-assembly protein LptD of Pseudomonas putida (strain GB-1).